The following is a 406-amino-acid chain: Erythromycin esterase type I (406 aa).

In terms of biological role, this enzyme confers resistance to erythromycin through inactivation by hydrolyzing the lactone ring of the antibiotic. This is Erythromycin esterase type I (ereA) from Escherichia coli.